A 302-amino-acid chain; its full sequence is tRNA dimethylallyltransferase (302 aa).

8 to 15 (GSSGSGKS) contacts ATP. 10 to 15 (SGSGKS) contributes to the substrate binding site. Positions 33-36 (DSLS) are interaction with substrate tRNA.

The protein belongs to the IPP transferase family. As to quaternary structure, monomer. Mg(2+) is required as a cofactor.

It catalyses the reaction adenosine(37) in tRNA + dimethylallyl diphosphate = N(6)-dimethylallyladenosine(37) in tRNA + diphosphate. Functionally, catalyzes the transfer of a dimethylallyl group onto the adenine at position 37 in tRNAs that read codons beginning with uridine, leading to the formation of N6-(dimethylallyl)adenosine (i(6)A). This chain is tRNA dimethylallyltransferase, found in Helicobacter hepaticus (strain ATCC 51449 / 3B1).